The primary structure comprises 356 residues: Molybdenum import ATP-binding protein ModC (356 aa).

An ABC transporter domain is found at 1 to 232 (MEDIHARFHI…LDLPIRLGED (232 aa)). Residue 33-40 (GHSGSGKT) coordinates ATP. The 66-residue stretch at 291–356 (ETSVLNLLRG…VQVKSVALME (66 aa)) folds into the Mop domain.

Belongs to the ABC transporter superfamily. Molybdate importer (TC 3.A.1.8) family. In terms of assembly, the complex is composed of two ATP-binding proteins (ModC), two transmembrane proteins (ModB) and a solute-binding protein (ModA).

The protein localises to the cell inner membrane. It catalyses the reaction molybdate(out) + ATP + H2O = molybdate(in) + ADP + phosphate + H(+). Its function is as follows. Part of the ABC transporter complex ModABC involved in molybdenum import. Responsible for energy coupling to the transport system. This is Molybdenum import ATP-binding protein ModC from Methylococcus capsulatus (strain ATCC 33009 / NCIMB 11132 / Bath).